Consider the following 769-residue polypeptide: MDIGKKHVIPKSQYRRKRREFFHNEDREENLNQHQDKQNIDNTTSKKADKQIHKDSIDKHERFKNSLSSHLEQRNRDVNENKAEESKSNQGSKSAYNKDHYLTDDVSKKQNSLDSVDQDTEKSKYYEQNTEATLSTNSTDKVESTDMRKLSSDKNKVGHEEQHVLSKPSEHDKETRIDFESSRTDSDSSMQTEKIKKDSSDGNKSSNLKSEVISDKSNSVPILSESDDEVNNQKPLTLPEEQKLKRQQSQNEQTKTYTYGDSEQNDKSNHENDLSHHTPSISDDKDYVMREDHIVDDNPDNDINTPSLSKIDDDRKLDEKIHVEDKHKQNADSSETVGYQSQSSASHRSTEKRNMAINDHDKLNGQKPNTKTSANNNQKKATSKLNKGRATNNNYSAILKKFWMMYWPKLVILMGIIILIVILNAIFNNVNKNDRMNDNNDADAQKYTTTMKNANNAVKSVVTVENETSKDSSLPKDKASQDEVGSGVVYKKSGDTLYIVTNAHVVGDKENQKITFSNNKSVVGKVLGKDKWSDLAVVKATSSDSSVKEIAIGDSNNLVLGEPILVVGNPLGVDFKGTVTEGIISGLNRNVPIDFDKDNKYDMLMKAFQIDASVNPGNSGGAVVNREGKLIGVVAAKISMPNVENMSFAIPVNEVQKIVKELETKGKIDYPDVGVKMKNIASLNSFERQAVKLLGKVKNGVVVDQVDNNGLADQSGLKKGDVITELDGKLLEDDLRFRQIIFSHKDDLKSITAKIYRDGKEKEINIKLK.

Residues 1 to 20 (MDIGKKHVIPKSQYRRKRRE) show a composition bias toward basic residues. Positions 1–388 (MDIGKKHVIP…KKATSKLNKG (388 aa)) are disordered. Basic and acidic residues-rich tracts occupy residues 21–64 (FFHN…ERFK), 71–87 (LEQR…EESK), and 96–108 (YNKD…DVSK). Over residues 126-139 (YEQNTEATLSTNST) the composition is skewed to polar residues. The span at 140-186 (DKVESTDMRKLSSDKNKVGHEEQHVLSKPSEHDKETRIDFESSRTDS) shows a compositional bias: basic and acidic residues. The segment covering 247–262 (QQSQNEQTKTYTYGDS) has biased composition (polar residues). Composition is skewed to basic and acidic residues over residues 264–296 (QNDK…HIVD) and 310–330 (KIDD…HKQN). Over residues 331–347 (ADSSETVGYQSQSSASH) the composition is skewed to polar residues. The span at 348–364 (RSTEKRNMAINDHDKLN) shows a compositional bias: basic and acidic residues. Polar residues predominate over residues 366–388 (QKPNTKTSANNNQKKATSKLNKG). A helical membrane pass occupies residues 410-430 (LVILMGIIILIVILNAIFNNV). Active-site charge relay system residues include His504, Asp534, and Ser619. Positions 680–733 (IASLNSFERQAVKLLGKVKNGVVVDQVDNNGLADQSGLKKGDVITELDGKLLED) constitute a PDZ domain.

Belongs to the peptidase S1C family.

It localises to the cell membrane. The chain is Serine protease HtrA-like from Staphylococcus aureus (strain MRSA252).